Reading from the N-terminus, the 60-residue chain is Cytotoxin 1 (60 aa).

Intrachain disulfides connect Cys-3–Cys-21, Cys-14–Cys-38, Cys-42–Cys-53, and Cys-54–Cys-59.

The protein belongs to the three-finger toxin family. Short-chain subfamily. Type IA cytotoxin sub-subfamily. As to quaternary structure, monomer in solution; Homodimer and oligomer in the presence of negatively charged lipids forming a pore with a size ranging between 20 and 30 angstroms. In terms of tissue distribution, expressed by the venom gland.

It is found in the secreted. The protein localises to the target cell membrane. In terms of biological role, basic protein that binds to cell membrane and depolarizes cardiomyocytes. This cytotoxin also possesses lytic activity on many other cells, including red blood cells. Interaction with sulfatides in the cell membrane induces pore formation and cell internalization and is responsible for cytotoxicity in cardiomyocytes. It targets the mitochondrial membrane and induces mitochondrial swelling and fragmentation. Inhibits protein kinases C. It binds to the integrin alpha-V/beta-3 with a moderate affinity. The protein is Cytotoxin 1 of Naja pallida (Red spitting cobra).